We begin with the raw amino-acid sequence, 332 residues long: uncharacterized protein (332 aa).

This sequence belongs to the peptidase U32 family.

This is an uncharacterized protein from Methanocaldococcus jannaschii (strain ATCC 43067 / DSM 2661 / JAL-1 / JCM 10045 / NBRC 100440) (Methanococcus jannaschii).